The following is a 141-amino-acid chain: Nucleoside diphosphate kinase (141 aa).

ATP is bound by residues lysine 9, phenylalanine 57, arginine 85, threonine 91, arginine 102, and asparagine 112. The Pros-phosphohistidine intermediate role is filled by histidine 115.

This sequence belongs to the NDK family. In terms of assembly, homotetramer. Mg(2+) is required as a cofactor.

It localises to the cytoplasm. It carries out the reaction a 2'-deoxyribonucleoside 5'-diphosphate + ATP = a 2'-deoxyribonucleoside 5'-triphosphate + ADP. It catalyses the reaction a ribonucleoside 5'-diphosphate + ATP = a ribonucleoside 5'-triphosphate + ADP. In terms of biological role, major role in the synthesis of nucleoside triphosphates other than ATP. The ATP gamma phosphate is transferred to the NDP beta phosphate via a ping-pong mechanism, using a phosphorylated active-site intermediate. This Chloroherpeton thalassium (strain ATCC 35110 / GB-78) protein is Nucleoside diphosphate kinase.